A 150-amino-acid chain; its full sequence is Cytochrome c oxidase subunit 5A, mitochondrial (150 aa).

The transit peptide at Met1–Tyr41 directs the protein to the mitochondrion. The SIFI-degron motif lies at Leu2 to Ala17. 2 positions are modified to N6-acetyllysine: Lys87 and Lys113. Thr141 carries the post-translational modification Phosphothreonine.

This sequence belongs to the cytochrome c oxidase subunit 5A family. In terms of assembly, component of the cytochrome c oxidase (complex IV, CIV), a multisubunit enzyme composed of 14 subunits. The complex is composed of a catalytic core of 3 subunits MT-CO1, MT-CO2 and MT-CO3, encoded in the mitochondrial DNA, and 11 supernumerary subunits COX4I, COX5A, COX5B, COX6A, COX6B, COX6C, COX7A, COX7B, COX7C, COX8 and NDUFA4, which are encoded in the nuclear genome. The complex exists as a monomer or a dimer and forms supercomplexes (SCs) in the inner mitochondrial membrane with NADH-ubiquinone oxidoreductase (complex I, CI) and ubiquinol-cytochrome c oxidoreductase (cytochrome b-c1 complex, complex III, CIII), resulting in different assemblies (supercomplex SCI(1)III(2)IV(1) and megacomplex MCI(2)III(2)IV(2)). Interacts with AFG1L. Interacts with RAB5IF. Post-translationally, in response to mitochondrial stress, the precursor protein is ubiquitinated by the SIFI complex in the cytoplasm before mitochondrial import, leading to its degradation. Within the SIFI complex, UBR4 initiates ubiquitin chain that are further elongated or branched by KCMF1.

The protein localises to the mitochondrion inner membrane. It functions in the pathway energy metabolism; oxidative phosphorylation. Its function is as follows. Component of the cytochrome c oxidase, the last enzyme in the mitochondrial electron transport chain which drives oxidative phosphorylation. The respiratory chain contains 3 multisubunit complexes succinate dehydrogenase (complex II, CII), ubiquinol-cytochrome c oxidoreductase (cytochrome b-c1 complex, complex III, CIII) and cytochrome c oxidase (complex IV, CIV), that cooperate to transfer electrons derived from NADH and succinate to molecular oxygen, creating an electrochemical gradient over the inner membrane that drives transmembrane transport and the ATP synthase. Cytochrome c oxidase is the component of the respiratory chain that catalyzes the reduction of oxygen to water. Electrons originating from reduced cytochrome c in the intermembrane space (IMS) are transferred via the dinuclear copper A center (CU(A)) of subunit 2 and heme A of subunit 1 to the active site in subunit 1, a binuclear center (BNC) formed by heme A3 and copper B (CU(B)). The BNC reduces molecular oxygen to 2 water molecules using 4 electrons from cytochrome c in the IMS and 4 protons from the mitochondrial matrix. The sequence is that of Cytochrome c oxidase subunit 5A, mitochondrial (COX5A) from Saguinus labiatus (Red-chested mustached tamarin).